Consider the following 141-residue polypeptide: Hemoglobin subunit alpha (141 aa).

Residues 1 to 141 (VLSPADKTNV…VSTVLTSKYR (141 aa)) form the Globin domain. A Phosphoserine modification is found at Ser-3. An N6-succinyllysine modification is found at Lys-7. Thr-8 bears the Phosphothreonine mark. An N6-succinyllysine modification is found at Lys-11. Lys-16 is modified (N6-acetyllysine; alternate). Position 16 is an N6-succinyllysine; alternate (Lys-16). Ser-35 is subject to Phosphoserine. The residue at position 40 (Lys-40) is an N6-succinyllysine. Residue His-58 participates in O2 binding. Residue His-87 coordinates heme b. Ser-102 carries the phosphoserine modification. Thr-108 is modified (phosphothreonine). 2 positions are modified to phosphoserine: Ser-124 and Ser-131. Residues Thr-134 and Thr-137 each carry the phosphothreonine modification. Ser-138 bears the Phosphoserine mark.

The protein belongs to the globin family. Heterotetramer of two alpha chains and two beta chains. Red blood cells.

Involved in oxygen transport from the lung to the various peripheral tissues. In terms of biological role, hemopressin acts as an antagonist peptide of the cannabinoid receptor CNR1. Hemopressin-binding efficiently blocks cannabinoid receptor CNR1 and subsequent signaling. The polypeptide is Hemoglobin subunit alpha (HBA) (Physeter macrocephalus (Sperm whale)).